A 141-amino-acid polypeptide reads, in one-letter code: MAKKVIKIVKLQIPAGKANPAPPVGPALGQAGVNIMAFCKEFNARTADQAGLIIPVEITVFEDRSFTFITKTPPAAVLLKKAAGIESGSGEPNRNKVATIKRDKVREIAELKMPDLNAASIEAAMRMVEGTARSMGIVIED.

The protein belongs to the universal ribosomal protein uL11 family. In terms of assembly, part of the ribosomal stalk of the 50S ribosomal subunit. Interacts with L10 and the large rRNA to form the base of the stalk. L10 forms an elongated spine to which L12 dimers bind in a sequential fashion forming a multimeric L10(L12)X complex. In terms of processing, one or more lysine residues are methylated.

Forms part of the ribosomal stalk which helps the ribosome interact with GTP-bound translation factors. The sequence is that of Large ribosomal subunit protein uL11 from Geobacillus thermodenitrificans (strain NG80-2).